The following is a 470-amino-acid chain: Fumarate reductase 1 (470 aa).

Residue 6-20 (VVVIGTGLAGLAAAN) participates in FAD binding. Phosphoserine is present on S66. Catalysis depends on residues H249 and R272.

This sequence belongs to the FAD-dependent oxidoreductase 2 family. FRD/SDH subfamily. FAD serves as cofactor. In terms of processing, the N-terminus is blocked.

It is found in the cytoplasm. It carries out the reaction succinate + NAD(+) = fumarate + NADH + H(+). Functionally, irreversibly catalyzes the reduction of fumarate to succinate. Together with the second isozyme of soluble fumarate reductase (OSM1), essential for anaerobic growth. Involved in maintaining redox balance. Reduction of fumarate is the main source of succinate during fermentation, and under anaerobic conditions, the formation of succinate is strictly required for the reoxidation of FADH(2). The protein is Fumarate reductase 1 (FRD1) of Saccharomyces cerevisiae (strain ATCC 204508 / S288c) (Baker's yeast).